We begin with the raw amino-acid sequence, 255 residues long: 5'-nucleotidase SurE (255 aa).

D8, D9, S39, and N91 together coordinate a divalent metal cation.

Belongs to the SurE nucleotidase family. Requires a divalent metal cation as cofactor.

It is found in the cytoplasm. It catalyses the reaction a ribonucleoside 5'-phosphate + H2O = a ribonucleoside + phosphate. Functionally, nucleotidase that shows phosphatase activity on nucleoside 5'-monophosphates. In Acinetobacter baumannii (strain SDF), this protein is 5'-nucleotidase SurE.